The sequence spans 455 residues: GTPase Der (455 aa).

EngA-type G domains are found at residues 4–169 and 178–353; these read PVVA…PPKD and IQMA…EQHR. GTP-binding positions include 10–17, 57–61, 120–123, 184–191, 231–235, and 296–299; these read GRPNVGKS, DTGGL, NKCE, DTAGI, and NKWD. The region spanning 354 to 439 is the KH-like domain; it reads RRVSTSVVNE…PVKLYWRGKQ (86 aa).

It belongs to the TRAFAC class TrmE-Era-EngA-EngB-Septin-like GTPase superfamily. EngA (Der) GTPase family. As to quaternary structure, associates with the 50S ribosomal subunit.

GTPase that plays an essential role in the late steps of ribosome biogenesis. In Parasynechococcus marenigrum (strain WH8102), this protein is GTPase Der.